The sequence spans 232 residues: Probable ADP-ribosylation factor GTPase-activating protein AGD15 (232 aa).

The region spanning 16–130 is the Arf-GAP domain; the sequence is SKILEALLKH…RWVSPGAIQP (115 aa). The segment at 31-54 adopts a C4-type zinc-finger fold; the sequence is CADCRSKAPRWASVNLGIFICMQC. Residues 203-232 form a disordered region; that stretch reads PNQKNENFSSEVNQNRRTTIAPPSSWATFD. A compositionally biased stretch (polar residues) spans 206–232; it reads KNENFSSEVNQNRRTTIAPPSSWATFD.

Functionally, GTPase-activating protein (GAP) for ADP ribosylation factor (ARF). The sequence is that of Probable ADP-ribosylation factor GTPase-activating protein AGD15 (AGD15) from Arabidopsis thaliana (Mouse-ear cress).